The primary structure comprises 179 residues: Transcription factor 21 (179 aa).

The segment at 19-88 (DCDSLKVDSN…VQRNAANARE (70 aa)) is disordered. 2 stretches are compositionally biased toward polar residues: residues 30 to 49 (EFGT…NGSP) and 70 to 80 (SGVSQEGKQVQ). Residues 79–131 (VQRNAANARERARMRVLSKAFSRLKTTLPWVPPDTKLSKLDTLRLASSYIAHL) form the bHLH domain.

In terms of assembly, efficient DNA binding requires dimerization with another bHLH protein. Forms a heterodimer with TCF3 and binds the E box (5'-CANNTG-3'). In terms of tissue distribution, expressed at high levels in lung, kidney, gut, heart, ovary and podocytes (visceral glomerular epithelial cells). Also found in spleen, large intestine, uterus, bladder and testis.

It localises to the nucleus. In terms of biological role, involved in epithelial-mesenchymal interactions in kidney and lung morphogenesis that include epithelial differentiation and branching morphogenesis. May be involved in the organogenesis of the spleen and heart and in cardiac and coronary artery development. May function in the development and sex differentiation of gonad via transcriptional regulation of AD4BP/SF-1. The polypeptide is Transcription factor 21 (Tcf21) (Mus musculus (Mouse)).